The sequence spans 224 residues: Protein DEHYDRATION-INDUCED 19 homolog 4 (224 aa).

Residues 1–12 (MDSNWINCPSVF) are compositionally biased toward polar residues. A disordered region spans residues 1–23 (MDSNWINCPSVFSSSSSSSRRCQ). Positions 13 to 23 (SSSSSSSRRCQ) are enriched in low complexity. Thr-117 carries the post-translational modification Phosphothreonine.

This sequence belongs to the Di19 family. In terms of processing, phosphorylated in vitro by CPK3 or CPK11. As to expression, expressed in seedlings, roots, leaves, stems, flowers and siliques.

It localises to the cytoplasm. The protein resides in the perinuclear region. In Arabidopsis thaliana (Mouse-ear cress), this protein is Protein DEHYDRATION-INDUCED 19 homolog 4 (DI19-4).